The chain runs to 289 residues: Oxaloacetate decarboxylase (289 aa).

Ser-50 serves as a coordination point for substrate. Residue Asp-88 coordinates Mg(2+). Arg-159 and His-235 together coordinate substrate.

The protein belongs to the isocitrate lyase/PEP mutase superfamily. Oxaloacetate decarboxylase family. Homotetramer; dimer of dimers. It depends on Mg(2+) as a cofactor.

It carries out the reaction oxaloacetate + H(+) = pyruvate + CO2. In terms of biological role, catalyzes the decarboxylation of oxaloacetate into pyruvate. Seems to play a role in maintaining cellular concentrations of bicarbonate and pyruvate. This Pseudomonas fluorescens (strain ATCC BAA-477 / NRRL B-23932 / Pf-5) protein is Oxaloacetate decarboxylase.